The following is a 920-amino-acid chain: Urea transporter 2 (920 aa).

A disordered region spans residues 25–57 (FTSPSWPSTSPDTHPALPLLEMPEEKDLRSSNE). Residues 26-39 (TSPSWPSTSPDTHP) are compositionally biased toward low complexity. The segment covering 47–57 (PEEKDLRSSNE) has biased composition (basic and acidic residues). 9 helical membrane passes run 151–170 (WWTITGGLGTVVSTLTALAL), 176–196 (AIASGLHGYNGMLVGLLMAVF), 204–224 (WWLLFPVTFTAMSCPVLSSAL), 233–253 (LPVFTLPFNIAVTLYLAATGH), 272–291 (ITWTEMEMPLLLQAIPVGVG), 302–322 (GGVFLVALFISSPLICLHAAI), 346–366 (WSYNCVLSCIAIGGMFYALTW), 370–390 (LLALICALFCAYMEAAISNIM), and 392–412 (VVGVPPGTWAFCLATIIFLLL). Residues 446-467 (EKAPSGGGGEHPPTAGPKVEEG) are disordered. Ser477 bears the Phosphoserine mark. A run of 4 helical transmembrane segments spans residues 600–620 (GILIILGLFIQNPWWAISGCL), 638–658 (AIAAGFHGYNGVLVGLLMAVF), 666–686 (WWLLLPVIIMSMSCPILSSAL), and 695–715 (LPVFTLPFNITVTLYLAATGH). N-linked (GlcNAc...) asparagine glycosylation is present at Asn733. 4 helical membrane-spanning segments follow: residues 764–784 (GGIFLIALFISSPLICLHAAI), 803–823 (IYFGLCGFNSTLACIAIGGMF), 832–852 (LLAIACALFAAYLGAALANML), and 854–874 (VFGLPPCTWPFCLSALTFLLL).

This sequence belongs to the urea transporter family. In terms of assembly, interacts with SNAPIN which enhances its urea transport activity. Epressed in the inner medulla of the kidney (at protein level). As to expression, expressed in the kidney.

It is found in the apical cell membrane. It localises to the cell membrane. It catalyses the reaction urea(in) = urea(out). With respect to regulation, inhibited by phloretin. Functionally, mediates the transport of urea driven by a concentration gradient across the cell membrane of the renal inner medullary collecting duct which is critical to the urinary concentrating mechanism. Its function is as follows. Mediates the transport of urea driven by a concentration gradient across the cell membrane of the kidney inner medullary collecting duct which is critical to the urinary concentrating mechanism. This Homo sapiens (Human) protein is Urea transporter 2 (SLC14A2).